Reading from the N-terminus, the 314-residue chain is Small ribosomal subunit biogenesis GTPase RsgA (314 aa).

The disordered stretch occupies residues 1-20 (MKRAPTKQPAKPAARGGERA). The CP-type G domain maps to 85–246 (SDQFKSKLFA…LIDSPGFQEF (162 aa)). Residues 134-137 (NKID) and 188-196 (GQSGMGKST) each bind GTP. Zn(2+) is bound by residues Cys270, Cys275, His277, and Cys283.

This sequence belongs to the TRAFAC class YlqF/YawG GTPase family. RsgA subfamily. Monomer. Associates with 30S ribosomal subunit, binds 16S rRNA. Zn(2+) is required as a cofactor.

The protein localises to the cytoplasm. One of several proteins that assist in the late maturation steps of the functional core of the 30S ribosomal subunit. Helps release RbfA from mature subunits. May play a role in the assembly of ribosomal proteins into the subunit. Circularly permuted GTPase that catalyzes slow GTP hydrolysis, GTPase activity is stimulated by the 30S ribosomal subunit. The protein is Small ribosomal subunit biogenesis GTPase RsgA of Burkholderia pseudomallei (strain K96243).